A 1877-amino-acid polypeptide reads, in one-letter code: Protein TIC 214 (1877 aa).

6 helical membrane passes run 18–38, 67–87, 90–110, 127–147, 175–195, and 224–244; these read IINSVVMVGLYYGFLTTFSIG, FIAGQLMMFISIYYAPLHLAL, PHTITVLALPYLLFHFFWNNH, LSIQCVFLNNLIFQLFNHFIL, VGWLIGHIFFMKWVELVLVWI, and IFSILLFITCVYYLGRIPSPI. Basic and acidic residues predominate over residues 249–258; sequence FKETSETEER. The segment at 249 to 308 is disordered; that stretch reads FKETSETEERGEGEEETDVEIETTFETKGTRQEQEGSTEEDPSLFSEEKEDPDKIDEREE. Composition is skewed to acidic residues over residues 259-271 and 284-298; these read GEGEEETDVEIET and GSTEEDPSLFSEEKE. Basic and acidic residues predominate over residues 299–308; that stretch reads DPDKIDEREE.

Belongs to the TIC214 family. Part of the Tic complex.

The protein localises to the plastid. The protein resides in the chloroplast inner membrane. Involved in protein precursor import into chloroplasts. May be part of an intermediate translocation complex acting as a protein-conducting channel at the inner envelope. The chain is Protein TIC 214 from Eucalyptus globulus subsp. globulus (Tasmanian blue gum).